The chain runs to 413 residues: 3-isopropylmalate dehydratase large subunit (413 aa).

Residues cysteine 293, cysteine 353, and cysteine 356 each contribute to the [4Fe-4S] cluster site.

The protein belongs to the aconitase/IPM isomerase family. LeuC type 2 subfamily. In terms of assembly, heterodimer of LeuC and LeuD. [4Fe-4S] cluster is required as a cofactor.

It carries out the reaction (2R,3S)-3-isopropylmalate = (2S)-2-isopropylmalate. It functions in the pathway amino-acid biosynthesis; L-leucine biosynthesis; L-leucine from 3-methyl-2-oxobutanoate: step 2/4. Catalyzes the isomerization between 2-isopropylmalate and 3-isopropylmalate, via the formation of 2-isopropylmaleate. The chain is 3-isopropylmalate dehydratase large subunit from Picrophilus torridus (strain ATCC 700027 / DSM 9790 / JCM 10055 / NBRC 100828 / KAW 2/3).